A 203-amino-acid polypeptide reads, in one-letter code: Probable chemoreceptor glutamine deamidase CheD (203 aa).

Belongs to the CheD family.

It carries out the reaction L-glutaminyl-[protein] + H2O = L-glutamyl-[protein] + NH4(+). In terms of biological role, probably deamidates glutamine residues to glutamate on methyl-accepting chemotaxis receptors (MCPs), playing an important role in chemotaxis. The sequence is that of Probable chemoreceptor glutamine deamidase CheD from Methylobacillus flagellatus (strain ATCC 51484 / DSM 6875 / VKM B-1610 / KT).